Reading from the N-terminus, the 267-residue chain is Large ribosomal subunit protein bL9m (267 aa).

Residues 1–52 (MAALVVTEPGRALLRAGTERLLRGGIQELLRPRHEGNSPGLARDFSLSQNRG) constitute a mitochondrion transit peptide.

Belongs to the bacterial ribosomal protein bL9 family. In terms of assembly, component of the mitochondrial ribosome large subunit (39S) which comprises a 16S rRNA and about 50 distinct proteins.

The protein localises to the mitochondrion. This is Large ribosomal subunit protein bL9m (MRPL9) from Papio anubis (Olive baboon).